Reading from the N-terminus, the 392-residue chain is NAC domain-containing protein 58 (392 aa).

Positions 9–173 (LPPGFRFHPT…DWVLCRIYKK (165 aa)) constitute an NAC domain. The interval 317 to 345 (STSAGAVVEPPAVTGKRKRSSDGGEPTIQ) is disordered.

In terms of tissue distribution, expressed in leaves, nodes, internodes and mature seeds. Highly expressed in roots. Expressed in leaf sheaths, flag leaves and inflorescences. Expressed in primary and lateral roots, particularly in the vascular tissues. Expressed in the primary phloem of the culm and leaf sheaths. Expressed principally in the primary phloem and in the peripheral zone of the leaf vascular bundles. Expressed in the floral tissues.

It localises to the nucleus. In terms of biological role, transcription factor that acts as a positive regulator of the jasmonate (JA) pathway to mediate leaf senescence. May directly regulate LOX2, AOC, AOS2, AOC1 and OPR7, which are genes involved in the biosynthesis of JA. Regulates positively leaf senescence by directly targeting senescence-associated genes (SAGs) related to chlorophyll degradation, nutrient transport and other genes associated with abscisic acid-induced leaf senescence. Transcription activator that plays a role in mediating abiotic stress responses through the abscisic acid (ABA) pathway. Possesses transcriptional activator activity in yeast. The chain is NAC domain-containing protein 58 from Oryza sativa subsp. japonica (Rice).